A 968-amino-acid polypeptide reads, in one-letter code: RNA polymerase-associated protein RapA (968 aa).

The Helicase ATP-binding domain maps to 164–334; it reads DVGRRHAPRV…FARLRLLDPD (171 aa). Position 177–184 (177–184) interacts with ATP; sequence DEVGLGKT. Positions 280–283 match the DEAH box motif; sequence DEAH. In terms of domain architecture, Helicase C-terminal spans 490 to 643; sequence RVEWLMGYLT…HTCPTGRAVY (154 aa).

Belongs to the SNF2/RAD54 helicase family. RapA subfamily. In terms of assembly, interacts with the RNAP. Has a higher affinity for the core RNAP than for the holoenzyme. Its ATPase activity is stimulated by binding to RNAP.

Transcription regulator that activates transcription by stimulating RNA polymerase (RNAP) recycling in case of stress conditions such as supercoiled DNA or high salt concentrations. Probably acts by releasing the RNAP, when it is trapped or immobilized on tightly supercoiled DNA. Does not activate transcription on linear DNA. Probably not involved in DNA repair. The sequence is that of RNA polymerase-associated protein RapA from Erwinia tasmaniensis (strain DSM 17950 / CFBP 7177 / CIP 109463 / NCPPB 4357 / Et1/99).